The following is a 190-amino-acid chain: GTP cyclohydrolase 1 (190 aa).

Zn(2+) is bound by residues C75, H78, and C146.

Belongs to the GTP cyclohydrolase I family. Toroid-shaped homodecamer, composed of two pentamers of five dimers.

It carries out the reaction GTP + H2O = 7,8-dihydroneopterin 3'-triphosphate + formate + H(+). It functions in the pathway cofactor biosynthesis; 7,8-dihydroneopterin triphosphate biosynthesis; 7,8-dihydroneopterin triphosphate from GTP: step 1/1. This chain is GTP cyclohydrolase 1, found in Campylobacter jejuni (strain RM1221).